Consider the following 102-residue polypeptide: MSNTTVPNAPQANSDSMVGYVLGPFFLITLVGVVVAVVMYVQKKKRVDRLRHHLLPMYSYDPAEELHEAEQELLSDMGDPKVVHGWQSGYQHKRMPLLDVKT.

Asparagine 3 is a glycosylation site (N-linked (GlcNAc...) asparagine). Residues valine 21–valine 41 traverse the membrane as a helical segment.

In terms of tissue distribution, expressed in spleen, thymus, prostate, testis, uterus, small intestine, colon and peripheral blood leukocytes.

The protein localises to the membrane. This is Small integral membrane protein 29 from Homo sapiens (Human).